We begin with the raw amino-acid sequence, 334 residues long: Oligopeptide transport ATP-binding protein OppF (334 aa).

Residues 12–265 (LEIADLKVHF…PLHPYTRALM (254 aa)) form the ABC transporter domain. 57 to 64 (GESGCGKS) provides a ligand contact to ATP.

Belongs to the ABC transporter superfamily. The complex is composed of two ATP-binding proteins (OppD and OppF), two transmembrane proteins (OppB and OppC) and a solute-binding protein (OppA or MppA).

The protein resides in the cell inner membrane. The catalysed reaction is a [peptide](out) + ATP + H2O = a [peptide](in) + ADP + phosphate + H(+). It catalyses the reaction L-alanyl-gamma-D-glutamyl-meso-2,6-diaminopimelate(out) + ATP + H2O = L-alanyl-gamma-D-glutamyl-meso-2,6-diaminopimelate(in) + ADP + phosphate + H(+). Functionally, part of the ABC transporter complex OppABCDF involved in the uptake of oligopeptides and of the ABC transporter complex MppA-OppBCDF involved in the uptake of the cell wall murein tripeptide L-alanyl-gamma-D-glutamyl-meso-diaminopimelate. Probably responsible for energy coupling to the transport system. Plays an important nutritional role and is involved in the recycling of cell wall peptides. This Escherichia coli (strain K12) protein is Oligopeptide transport ATP-binding protein OppF (oppF).